The sequence spans 130 residues: MNFNDIETMVKSKFKDIKKHAEEIAHEIEVRSGYLRKAEQYKRLEFNLSFALDDIESTAKDVQTAKSSANKDSVTVKGKAPNTLYIEKRNLMKQKLEMLGEDIDKNKESLQKAKEIAGEKASEYFNKAMN.

This sequence belongs to the EsxC family. As to quaternary structure, forms both homodimers and heterodimers with EsxA. Homodimerization is calcium-dependent.

The protein localises to the secreted. This is Type VII secretion system extracellular protein C from Staphylococcus aureus (strain USA300).